The chain runs to 821 residues: Leucine--tRNA ligase (821 aa).

The 'HIGH' region signature appears at 42–52 (PYPSGKLHMGH). A 'KMSKS' region motif is present at residues 583–587 (KMSKS). Lys586 is an ATP binding site.

Belongs to the class-I aminoacyl-tRNA synthetase family.

The protein localises to the cytoplasm. It carries out the reaction tRNA(Leu) + L-leucine + ATP = L-leucyl-tRNA(Leu) + AMP + diphosphate. This is Leucine--tRNA ligase from Carboxydothermus hydrogenoformans (strain ATCC BAA-161 / DSM 6008 / Z-2901).